A 113-amino-acid polypeptide reads, in one-letter code: Iron-sulfur cluster insertion protein ErpA (113 aa).

Iron-sulfur cluster-binding residues include C41, C105, and C107.

This sequence belongs to the HesB/IscA family. Homodimer. It depends on iron-sulfur cluster as a cofactor.

Required for insertion of 4Fe-4S clusters for at least IspG. The chain is Iron-sulfur cluster insertion protein ErpA from Aliivibrio salmonicida (strain LFI1238) (Vibrio salmonicida (strain LFI1238)).